The sequence spans 594 residues: Keratin, type II cytoskeletal 2 oral (594 aa).

The interval 1–164 (MSRQACKKSF…DPQIGQVKAQ (164 aa)) is head. Omega-N-methylarginine occurs at positions 85 and 104. The coil 1A stretch occupies residues 165–200 (EREQIKTLNNKFASFIDKVRFLEQQNKVLETKWELL). An IF rod domain is found at 165–480 (EREQIKTLNN…KLLEGEECRL (316 aa)). The segment at 201 to 221 (QQQTIRSGSGPQNLEPFFESY) is linker 1. The segment at 222 to 313 (ISCLRKQLDS…TLYDMELSQI (92 aa)) is coil 1B. The tract at residues 314–337 (QSHVSDTSVVLSMDNNRCLDLDSI) is linker 12. The interval 338–476 (IAEVKAQYED…ATYRKLLEGE (139 aa)) is coil 2. The segment at 477–594 (ECRLSGEFQN…TTSSSQQRSK (118 aa)) is tail. Residues 497–594 (TSTSSSGSFR…TTSSSQQRSK (98 aa)) form a disordered region. Gly residues predominate over residues 506–522 (RGTGGSNYGGDSSGRSG). A compositionally biased stretch (low complexity) spans 523–551 (GSSSSSSRGSSSRGSSGSRLGSGGSISVS). Arg-541 is subject to Omega-N-methylarginine. A compositionally biased stretch (polar residues) spans 552 to 564 (QQRMGFNSGGSQT). Residues 565–594 (SVGSSYKSGRGGSSSVQFSQTTSSSQQRSK) are compositionally biased toward low complexity.

Belongs to the intermediate filament family. Heterotetramer of two type I and two type II keratins.

Its function is as follows. Probably contributes to terminal cornification. In Mus musculus (Mouse), this protein is Keratin, type II cytoskeletal 2 oral.